We begin with the raw amino-acid sequence, 1872 residues long: Ral GTPase-activating protein subunit alpha-2 (1872 aa).

A phosphoserine mark is found at S373, S376, and S379. Residues 446–469 (DKKDVAEEDADKLGLSETDSKEVS) show a composition bias toward basic and acidic residues. The disordered stretch occupies residues 446-481 (DKKDVAEEDADKLGLSETDSKEVSSESSGHKRSSSW). S486 and S696 each carry phosphoserine. 2 disordered regions span residues 711-730 (FRSA…NTVR) and 758-849 (QPVP…TGSD). At T715 the chain carries Phosphothreonine; by PKB. Residues 775-795 (SDSSQGQKVENSQNLSSSEPK) show a composition bias toward polar residues. Positions 796-810 (SVQESKGHVTHEHEG) are enriched in basic and acidic residues. 2 positions are modified to phosphoserine: S819 and S820. Residues 824–843 (LDLKEESQQTHGRCRERQKS) are compositionally biased toward basic and acidic residues. Phosphoserine is present on S1592. The 209-residue stretch at 1634-1842 (LKNLDSRQCR…EERALYLEAI (209 aa)) folds into the Rap-GAP domain.

In terms of assembly, component of the heterodimeric RalGAP2 complex with RALGAPB. Heterodimerization is required for activity. As to expression, highly expressed in lung, liver, testis and thymus with lower levels in brain and heart (at protein level).

It is found in the cytoplasm. Its function is as follows. Catalytic subunit of the heterodimeric RalGAP2 complex which acts as a GTPase activator for the Ras-like small GTPases RALA and RALB. The polypeptide is Ral GTPase-activating protein subunit alpha-2 (Rattus norvegicus (Rat)).